The sequence spans 200 residues: UPF0316 protein SACOL1973 (200 aa).

The next 3 membrane-spanning stretches (helical) occupy residues 8-28 (PWLM…FLTM), 40-60 (IAAS…GLVM), and 66-86 (IQNI…GMKI).

This sequence belongs to the UPF0316 family.

It is found in the cell membrane. In Staphylococcus aureus (strain COL), this protein is UPF0316 protein SACOL1973.